Here is a 365-residue protein sequence, read N- to C-terminus: Uroporphyrinogen decarboxylase (365 aa).

Substrate-binding positions include 27-31 (RQAGR), Asp77, Tyr154, Ser209, and His327.

It belongs to the uroporphyrinogen decarboxylase family. Homodimer.

The protein localises to the cytoplasm. It carries out the reaction uroporphyrinogen III + 4 H(+) = coproporphyrinogen III + 4 CO2. Its pathway is porphyrin-containing compound metabolism; protoporphyrin-IX biosynthesis; coproporphyrinogen-III from 5-aminolevulinate: step 4/4. In terms of biological role, catalyzes the decarboxylation of four acetate groups of uroporphyrinogen-III to yield coproporphyrinogen-III. This is Uroporphyrinogen decarboxylase from Alkalilimnicola ehrlichii (strain ATCC BAA-1101 / DSM 17681 / MLHE-1).